We begin with the raw amino-acid sequence, 188 residues long: MPKASEIKKGFAIESNGKTLLVKDIEVTTPGGRGGAKIYKMRCTDLNTGARVDERYKSDDVVETVEMNKRAVVYSYADGDEHIFMDNEDYSQYTFKHNEVEDELLFINEDTQGIHLILINGSAVGIELPSSVELVIEETDPSIKGASASARTKPARFASGLVIQVPEYIATGDRVIINTTERKYMSRA.

Belongs to the elongation factor P family.

The protein is Elongation factor P-like protein of Vibrio campbellii (strain ATCC BAA-1116).